The following is a 345-amino-acid chain: Phosphoribosylformylglycinamidine cyclo-ligase (345 aa).

It belongs to the AIR synthase family.

It localises to the cytoplasm. It carries out the reaction 2-formamido-N(1)-(5-O-phospho-beta-D-ribosyl)acetamidine + ATP = 5-amino-1-(5-phospho-beta-D-ribosyl)imidazole + ADP + phosphate + H(+). Its pathway is purine metabolism; IMP biosynthesis via de novo pathway; 5-amino-1-(5-phospho-D-ribosyl)imidazole from N(2)-formyl-N(1)-(5-phospho-D-ribosyl)glycinamide: step 2/2. The protein is Phosphoribosylformylglycinamidine cyclo-ligase of Escherichia coli O6:K15:H31 (strain 536 / UPEC).